We begin with the raw amino-acid sequence, 142 residues long: MASTSASSQPSTLYQLCKDFGLTLRNLQICCIWCKNHLTSAEAYAYHFKDLHVVWKKGFPYAACAFCLEFYSKVCALRHYDRSAFWHTVEQETGLLLEEQIIRCAICQKPLSPSEKDHHIYNGRHFRFILNRWTGRCTQCRE.

2 zinc fingers span residues 31 to 67 (CIWCKNHLTSAEAYAYHFKDLHVVWKKGFPYAACAFC) and 104 to 140 (CAICQKPLSPSEKDHHIYNGRHFRFILNRWTGRCTQC).

It belongs to the papillomaviridae E6 protein family. As to quaternary structure, forms homodimers. Interacts with ubiquitin-protein ligase UBE3A/E6-AP; this interaction stimulates UBE3A ubiquitin activity. Interacts with host TP53 and EP300; this interaction inhibits TP53 activity.

Its subcellular location is the host cytoplasm. It localises to the host nucleus. Its function is as follows. Plays a major role in the induction and maintenance of cellular transformation. E6 associates with host UBE3A/E6-AP ubiquitin-protein ligase and modulates its activity. Sequesters tumor suppressor TP53 in the host cytoplasm and modulates its activity by interacting with host EP300 that results in the reduction of TP53 acetylation and activation. In turn, apoptosis induced by DNA damage is inhibited. E6 also protects host keratinocytes from apoptosis by mediating the degradation of host BAK1. May also inhibit host immune response. The chain is Protein E6 from Homo sapiens (Human).